A 111-amino-acid polypeptide reads, in one-letter code: MGKLTLLLLILLGWLQYSLWLGKNGIHDYVRVKDDVVVQQGNNAKLKDRNEQLFAEIDDLNGGQEAIEERARNELGMIKPGESFYRLVPESNHRNANTAPSTNTPSNNIQR.

The Cytoplasmic segment spans residues 1–3 (MGK). The helical transmembrane segment at 4–21 (LTLLLLILLGWLQYSLWL) threads the bilayer. The Periplasmic segment spans residues 22–111 (GKNGIHDYVR…TNTPSNNIQR (90 aa)). Residues 33-63 (KDDVVVQQGNNAKLKDRNEQLFAEIDDLNGG) adopt a coiled-coil conformation. Residues 90-111 (ESNHRNANTAPSTNTPSNNIQR) form a disordered region. Over residues 95–111 (NANTAPSTNTPSNNIQR) the composition is skewed to low complexity.

This sequence belongs to the FtsB family. In terms of assembly, part of a complex composed of FtsB, FtsL and FtsQ.

It localises to the cell inner membrane. In terms of biological role, essential cell division protein. May link together the upstream cell division proteins, which are predominantly cytoplasmic, with the downstream cell division proteins, which are predominantly periplasmic. The chain is Cell division protein FtsB from Pectobacterium carotovorum subsp. carotovorum (strain PC1).